The following is a 329-amino-acid chain: Beta-ketoacyl-[acyl-carrier-protein] synthase III (329 aa).

Active-site residues include C123 and H256. The segment at 257-261 (QANIR) is ACP-binding. N286 is a catalytic residue.

It belongs to the thiolase-like superfamily. FabH family. Homodimer.

The protein localises to the cytoplasm. The catalysed reaction is malonyl-[ACP] + acetyl-CoA + H(+) = 3-oxobutanoyl-[ACP] + CO2 + CoA. The protein operates within lipid metabolism; fatty acid biosynthesis. Functionally, catalyzes the condensation reaction of fatty acid synthesis by the addition to an acyl acceptor of two carbons from malonyl-ACP. Catalyzes the first condensation reaction which initiates fatty acid synthesis and may therefore play a role in governing the total rate of fatty acid production. Possesses both acetoacetyl-ACP synthase and acetyl transacylase activities. Its substrate specificity determines the biosynthesis of branched-chain and/or straight-chain of fatty acids. The protein is Beta-ketoacyl-[acyl-carrier-protein] synthase III of Burkholderia pseudomallei (strain 1710b).